We begin with the raw amino-acid sequence, 166 residues long: MANKLFLVCAALALCFILTNASVYRTVVEFDEDDASNPIGPIQKCQKEFQQDQHLRACQRWMRKQMWQGRGGGPSLDDEFDMEDDIENPQRRQLLQKCCSELRQEEPVCVCPTLRQAAKAVRFQGQQHQPEQVRKIYQAAKYLPNICKIQQVGVCPFQIPSIPSYY.

The first 21 residues, 1 to 21, serve as a signal peptide directing secretion; the sequence is MANKLFLVCAALALCFILTNA. Propeptides lie at residues 22-37 and 73-88; these read SVYR…DASN and GPSL…DIEN.

The protein belongs to the 2S seed storage albumins family. As to quaternary structure, the mature protein consists of a small and a large chain linked by disulfide bonds.

In terms of biological role, this is a 2S seed storage protein. The protein is 2S seed storage protein 4 (AT2S4) of Arabidopsis thaliana (Mouse-ear cress).